Consider the following 258-residue polypeptide: MLILISPAKTLDYQSPLTTMRYTLPELLDNSQQLIHEARKLTPPQISTLMRISDKLAGINAARFHDWQPDFTPENARQAILAFKGDVYTGLQAETFSEDDFDFAQQHLRMLSGLYGVLRPLDLMQPYRLEMGIRLENARGKDLYQFWGDIITNKLNEALAAQGDNVVINLASDEYFKSVKPKKLNAEIIKPVFLDEKNGKFKIISFYAKKARGLMSRFIIENRLTKPEQLTGFNSEGYFFDEDSSSNGELVFKRYEQR.

The protein belongs to the UPF0246 family.

The chain is UPF0246 protein YaaA from Escherichia coli O8 (strain IAI1).